Consider the following 542-residue polypeptide: MPTYRFNYLRFNKLCVSFFRSKFDKRPFASQKFPENLVPDNSSNDANSQPEEVSSKKPWYVDEKHNLFPKKAHFDAVALPPIPKGAPNFLADVLNLLKKKYYATDLSFVNSPADSFWCDSDLILLASCNCGSEVVSATNGLLRLLKQKNVGPVNVDGLTSASRRKILERRMRKRSNLSNRQLNTSENNWTCLSIENFGISIHVITKNFREYYKLDNIEHVKDETLYSDLEHGKQSRVSLTSKSTPDNSLPPNFINNHSNVFRRSFHTCNFSLKSAASLYCDTQDILLNVNSQNLTSTLEKYKKMHLQNPNNFSLDFTLSIFERLRKDSSLQLTTKDINTLFSTIALSPTKLSMASKHSKNLVSERMLYLSLMYKSLVDLKTIDSFSLKLLFLKFMICSCMVKGESNFFLDNRIFLLERIMNRYGIPMTIDTFLLMQFILAKSNRWSEVWRRWDNLRKAGVVFNERLYNHVYLLAFESKNERVINYVLTNIFEDMVSQSPPIPASKLMATSLKKCVQSLPEKYAHSFPSVRNYIAKMENSMTH.

A mitochondrion-targeting transit peptide spans 1–28 (MPTYRFNYLRFNKLCVSFFRSKFDKRPF). The disordered stretch occupies residues 34–56 (PENLVPDNSSNDANSQPEEVSSK). Polar residues predominate over residues 39 to 52 (PDNSSNDANSQPEE).

Belongs to the ATP25 family.

Its subcellular location is the mitochondrion inner membrane. MRNA stabilization factor specific for the 0.95 kb oli1 mRNA. Also involved in oli1 ring formation. This is ATPase synthesis protein 25, mitochondrial (atp25) from Schizosaccharomyces pombe (strain 972 / ATCC 24843) (Fission yeast).